The following is a 149-amino-acid chain: Large ribosomal subunit protein bL9 (149 aa).

This sequence belongs to the bacterial ribosomal protein bL9 family.

Binds to the 23S rRNA. The sequence is that of Large ribosomal subunit protein bL9 from Magnetococcus marinus (strain ATCC BAA-1437 / JCM 17883 / MC-1).